The chain runs to 154 residues: Small ribosomal subunit protein uS7 (154 aa).

The protein belongs to the universal ribosomal protein uS7 family. As to quaternary structure, part of the 30S ribosomal subunit. Contacts proteins S9 and S11.

In terms of biological role, one of the primary rRNA binding proteins, it binds directly to 16S rRNA where it nucleates assembly of the head domain of the 30S subunit. Is located at the subunit interface close to the decoding center, probably blocks exit of the E-site tRNA. This chain is Small ribosomal subunit protein uS7, found in Karelsulcia muelleri (strain GWSS) (Sulcia muelleri).